A 405-amino-acid polypeptide reads, in one-letter code: Calsequestrin-1 (405 aa).

The signal sequence occupies residues 1-34 (MRATDRMGARAVSELRLALLFVLVLGTPRLGVQG). The residue at position 43 (tyrosine 43) is a Phosphotyrosine. Serine 81 is modified (phosphoserine). Phosphothreonine is present on threonine 124. At serine 216 the chain carries Phosphoserine. An N-linked (GlcNAc...) asparagine glycan is attached at asparagine 350. The interval 382–405 (EGEINTEDDDDDDDDDDDDDDDDD) is disordered.

The protein belongs to the calsequestrin family. Monomer; increases in response to a depletion of intracellular calcium. Homodimer. Homotetramer and homopolymer. Can form linear homooligomers. Ca(2+) ions promote oligomerization. Interacts (via C-terminal end and preferentially with the monomeric form) with STIM1; this interaction increases in response to a depletion of intracellular calcium, decreases both STIM1 aggregation and clustering, interaction of STIM1 with ORAI1 and store-operated Ca(2+) entry (SOCE) activity. Interacts with ASPH and TRDN. In terms of processing, N-glycosylated. In terms of tissue distribution, detected in skeletal muscle (at protein level). Detected in skeletal muscle.

The protein resides in the endoplasmic reticulum. The protein localises to the sarcoplasmic reticulum. Its subcellular location is the sarcoplasmic reticulum lumen. It localises to the sarcoplasmic reticulum membrane. It is found in the mitochondrion matrix. Calsequestrin is a high-capacity, moderate affinity, calcium-binding protein and thus acts as an internal calcium store in muscle. Calcium ions are bound by clusters of acidic residues at the protein surface, often at the interface between subunits. Can bind around 80 Ca(2+) ions. Regulates the release of lumenal Ca(2+) via the calcium release channel RYR1; this plays an important role in triggering muscle contraction. Negatively regulates store-operated Ca(2+) entry (SOCE) activity. This is Calsequestrin-1 (Casq1) from Mus musculus (Mouse).